Reading from the N-terminus, the 318-residue chain is NADH-ubiquinone oxidoreductase chain 1 (318 aa).

The next 8 membrane-spanning stretches (helical) occupy residues 2-22 (FFIN…FLTL), 70-90 (LFII…VPLP), 100-120 (LGIL…LWSG), 136-156 (VAQT…VLLM), 171-191 (HMWL…STLA), 231-251 (IILM…YINL), 253-273 (ELYS…FLWI), and 293-313 (FLPL…FTAG).

It belongs to the complex I subunit 1 family. As to quaternary structure, core subunit of respiratory chain NADH dehydrogenase (Complex I) which is composed of 45 different subunits.

It localises to the mitochondrion inner membrane. The catalysed reaction is a ubiquinone + NADH + 5 H(+)(in) = a ubiquinol + NAD(+) + 4 H(+)(out). Its function is as follows. Core subunit of the mitochondrial membrane respiratory chain NADH dehydrogenase (Complex I) which catalyzes electron transfer from NADH through the respiratory chain, using ubiquinone as an electron acceptor. Essential for the catalytic activity and assembly of complex I. This chain is NADH-ubiquinone oxidoreductase chain 1 (Mtnd1), found in Mus musculus (Mouse).